Reading from the N-terminus, the 328-residue chain is Sterol demethylase protein B (328 aa).

The protein belongs to the NAD(P)-dependent epimerase/dehydratase family.

The catalysed reaction is a 3beta-hydroxy-4alpha-methylsteroid-4beta-carboxylate + NAD(+) = a 4alpha-methyl-3-oxosteroid + CO2 + NADH. It catalyses the reaction a 3beta-hydroxy-4alpha-methylsteroid-4beta-carboxylate + NADP(+) = a 4alpha-methyl-3-oxosteroid + CO2 + NADPH. The enzyme catalyses 4beta-carboxy-4alpha-methyl-5alpha-cholesta-8,24-dien-3beta-ol + NAD(+) = 3-dehydro-4alpha-methylzymosterol + CO2 + NADH. It carries out the reaction 4beta-carboxy-4alpha-methyl-5alpha-cholesta-8,24-dien-3beta-ol + NADP(+) = 3-dehydro-4alpha-methylzymosterol + CO2 + NADPH. The catalysed reaction is 3-dehydro-4alpha-methylzymosterol + NADPH + H(+) = 4alpha-methylzymosterol + NADP(+). It participates in steroid biosynthesis; sterol biosynthesis. In terms of biological role, participates in the biosynthesis of bacterial sterols. Together with SdmA, removes one methyl group from the C-4 position of 4,4-dimethylated steroid molecules. SdmB catalyzes an oxidative decarboxylation that results in reduction of the 3beta-hydroxy group at the C-3 carbon to an oxo group. It also functions as a ketoreductase that converts the C-3 oxo group back to a hydroxyl group after C-4 demethylation. This chain is Sterol demethylase protein B, found in Methylococcus capsulatus (strain ATCC 33009 / NCIMB 11132 / Bath).